A 236-amino-acid chain; its full sequence is Exosome complex component Rrp4 (236 aa).

An S1 motif domain is found at 64 to 133 (GDKVIGKVIE…EIKESWLTLK (70 aa)). A KH domain is found at 141–199 (EGGHMVLIHASRVPRVIGKGGGMVNMVKELTATRIIIGQNGLIWIDGPIEGVTMAIAAI).

It belongs to the RRP4 family. As to quaternary structure, component of the archaeal exosome complex. Forms a trimer of Rrp4 and/or Csl4 subunits. The trimer associates with a hexameric ring-like arrangement composed of 3 Rrp41-Rrp42 heterodimers.

It is found in the cytoplasm. In terms of biological role, non-catalytic component of the exosome, which is a complex involved in RNA degradation. Increases the RNA binding and the efficiency of RNA degradation. Confers strong poly(A) specificity to the exosome. The sequence is that of Exosome complex component Rrp4 from Thermoplasma acidophilum (strain ATCC 25905 / DSM 1728 / JCM 9062 / NBRC 15155 / AMRC-C165).